Consider the following 125-residue polypeptide: MRIAGVDLPRNKHVVIGLTYVYGIGRTTAKKILAKAGVPEDKKVSEVTDDEANEIRTIVTNEYKVEGQARSEQQLAIKRLMDIGCYRGLRHRRGLPARGQRTRTNARTRKGKRKTVAGKKKAGKK.

A disordered region spans residues 91–125; sequence HRRGLPARGQRTRTNARTRKGKRKTVAGKKKAGKK.

Belongs to the universal ribosomal protein uS13 family. In terms of assembly, part of the 30S ribosomal subunit. Forms a loose heterodimer with protein S19. Forms two bridges to the 50S subunit in the 70S ribosome.

Functionally, located at the top of the head of the 30S subunit, it contacts several helices of the 16S rRNA. In the 70S ribosome it contacts the 23S rRNA (bridge B1a) and protein L5 of the 50S subunit (bridge B1b), connecting the 2 subunits; these bridges are implicated in subunit movement. Contacts the tRNAs in the A and P-sites. This Chloroherpeton thalassium (strain ATCC 35110 / GB-78) protein is Small ribosomal subunit protein uS13.